The primary structure comprises 229 residues: Endonuclease V (229 aa).

Residues Asp-46 and Asp-114 each contribute to the Mg(2+) site.

This sequence belongs to the endonuclease V family. Mg(2+) is required as a cofactor.

It is found in the cytoplasm. The catalysed reaction is Endonucleolytic cleavage at apurinic or apyrimidinic sites to products with a 5'-phosphate.. DNA repair enzyme involved in the repair of deaminated bases. Selectively cleaves double-stranded DNA at the second phosphodiester bond 3' to a deoxyinosine leaving behind the intact lesion on the nicked DNA. The polypeptide is Endonuclease V (Streptomyces avermitilis (strain ATCC 31267 / DSM 46492 / JCM 5070 / NBRC 14893 / NCIMB 12804 / NRRL 8165 / MA-4680)).